A 275-amino-acid chain; its full sequence is Large ribosomal subunit protein uL2 (275 aa).

Residues 223-275 (GVVMNPVDHPHGGGEGRGKGHHPQSPWGVPAKGYKTRRGKRASDKFIVRRRNG) are disordered. The span at 230 to 240 (DHPHGGGEGRG) shows a compositional bias: basic and acidic residues.

It belongs to the universal ribosomal protein uL2 family. Part of the 50S ribosomal subunit. Forms a bridge to the 30S subunit in the 70S ribosome.

Its function is as follows. One of the primary rRNA binding proteins. Required for association of the 30S and 50S subunits to form the 70S ribosome, for tRNA binding and peptide bond formation. It has been suggested to have peptidyltransferase activity; this is somewhat controversial. Makes several contacts with the 16S rRNA in the 70S ribosome. The sequence is that of Large ribosomal subunit protein uL2 from Fervidobacterium nodosum (strain ATCC 35602 / DSM 5306 / Rt17-B1).